A 264-amino-acid chain; its full sequence is Small ribosomal subunit protein uS2 (264 aa).

Belongs to the universal ribosomal protein uS2 family.

The sequence is that of Small ribosomal subunit protein uS2 from Helicobacter pylori (strain P12).